The following is a 222-amino-acid chain: 3-dehydroquinate dehydratase (222 aa).

3-dehydroquinate contacts are provided by residues 29-31 and Arg55; that span reads ELR. The Proton donor/acceptor role is filled by His112. Lys139 acts as the Schiff-base intermediate with substrate in catalysis. The 3-dehydroquinate site is built by Arg178, Ser199, and Gln203.

Belongs to the type-I 3-dehydroquinase family. As to quaternary structure, homodimer.

It catalyses the reaction 3-dehydroquinate = 3-dehydroshikimate + H2O. The protein operates within metabolic intermediate biosynthesis; chorismate biosynthesis; chorismate from D-erythrose 4-phosphate and phosphoenolpyruvate: step 3/7. Functionally, involved in the third step of the chorismate pathway, which leads to the biosynthesis of aromatic amino acids. Catalyzes the cis-dehydration of 3-dehydroquinate (DHQ) and introduces the first double bond of the aromatic ring to yield 3-dehydroshikimate. This Dehalococcoides mccartyi (strain ATCC BAA-2100 / JCM 16839 / KCTC 5957 / BAV1) protein is 3-dehydroquinate dehydratase.